The chain runs to 544 residues: Membrane protein insertase YidC (544 aa).

5 helical membrane-spanning segments follow: residues 6–26 (NILL…WQTD), 345–365 (LLMF…LITL), 423–443 (GGCL…WVLL), 460–480 (LSVQ…MFVM), and 503–523 (VVFT…WLVG).

The protein belongs to the OXA1/ALB3/YidC family. Type 1 subfamily. In terms of assembly, interacts with the Sec translocase complex via SecD. Specifically interacts with transmembrane segments of nascent integral membrane proteins during membrane integration.

The protein resides in the cell inner membrane. Functionally, required for the insertion and/or proper folding and/or complex formation of integral membrane proteins into the membrane. Involved in integration of membrane proteins that insert both dependently and independently of the Sec translocase complex, as well as at least some lipoproteins. Aids folding of multispanning membrane proteins. The sequence is that of Membrane protein insertase YidC from Shewanella woodyi (strain ATCC 51908 / MS32).